The chain runs to 113 residues: N(2)-fixation sustaining protein CowN (113 aa).

Belongs to the CowN family.

In terms of biological role, is required to sustain N(2)-dependent growth in the presence of low levels of carbon monoxide (CO). Probably acts by protecting the N(2) fixation ability of the nitrogenase complex, which is inactivated in the presence of CO. This Azoarcus sp. (strain BH72) protein is N(2)-fixation sustaining protein CowN.